A 230-amino-acid polypeptide reads, in one-letter code: MTEIADPRDRLIVALDLPSVQAAEALIDRIGDAATFYKIGYQLGYAGGLALAERLAARGLKVFLDLKLHDIGNTVEEGVRSASGSGATFLTVHAYPQTMRAAVRGRGAGLRILAVTVLTSYDDADAAEAGYGLPVAELVAKRAAQAAEIGIDGLVCSAAEAGSVRRIVGPDRLIVTPGIRPAGAEAGDQKRVMTPGDARRAGIDHVVVGRPITGAADPRAVAQAIVADLA.

Substrate is bound by residues D16, K38, 65-74, T119, R180, Q189, G209, and R210; that span reads DLKLHDIGNT. K67 serves as the catalytic Proton donor.

It belongs to the OMP decarboxylase family. Type 1 subfamily. In terms of assembly, homodimer.

The catalysed reaction is orotidine 5'-phosphate + H(+) = UMP + CO2. It functions in the pathway pyrimidine metabolism; UMP biosynthesis via de novo pathway; UMP from orotate: step 2/2. In terms of biological role, catalyzes the decarboxylation of orotidine 5'-monophosphate (OMP) to uridine 5'-monophosphate (UMP). The protein is Orotidine 5'-phosphate decarboxylase of Methylobacterium radiotolerans (strain ATCC 27329 / DSM 1819 / JCM 2831 / NBRC 15690 / NCIMB 10815 / 0-1).